Here is a 247-residue protein sequence, read N- to C-terminus: Anionic trypsin (247 aa).

Residues 1–15 form the signal peptide; sequence MHPLLILAFVGAAVA. The propeptide at 16 to 23 is activation peptide; the sequence is FPSDDDDK. The Peptidase S1 domain maps to 24–244; it reads IVGGYTCAEN…YVDWIQETIA (221 aa). 6 disulfide bridges follow: C30–C160, C48–C64, C132–C233, C139–C206, C171–C185, and C196–C220. The Charge relay system role is filled by H63. Positions 75, 77, 80, and 85 each coordinate Ca(2+). The Charge relay system role is filled by D107. S200 acts as the Charge relay system in catalysis.

The protein belongs to the peptidase S1 family. Requires Ca(2+) as cofactor. Post-translationally, not sulfated on tyrosine residue(s).

The protein localises to the secreted. The protein resides in the extracellular space. The enzyme catalyses Preferential cleavage: Arg-|-Xaa, Lys-|-Xaa.. The sequence is that of Anionic trypsin from Bos taurus (Bovine).